The chain runs to 401 residues: Formate-dependent phosphoribosylglycinamide formyltransferase (401 aa).

N(1)-(5-phospho-beta-D-ribosyl)glycinamide is bound by residues 27 to 28 and Glu87; that span reads EL. Residues Arg119, Lys160, 165–170, 200–203, and Glu208 contribute to the ATP site; these read SSGKGQ and EELV. Positions 124–313 constitute an ATP-grasp domain; sequence EFAAEEVGVT…QFDLHLRAIL (190 aa). Mg(2+) is bound by residues Glu272 and Glu284. N(1)-(5-phospho-beta-D-ribosyl)glycinamide-binding positions include Asp291, Lys361, and 368–369; that span reads RR.

This sequence belongs to the PurK/PurT family. As to quaternary structure, homodimer.

It catalyses the reaction N(1)-(5-phospho-beta-D-ribosyl)glycinamide + formate + ATP = N(2)-formyl-N(1)-(5-phospho-beta-D-ribosyl)glycinamide + ADP + phosphate + H(+). It functions in the pathway purine metabolism; IMP biosynthesis via de novo pathway; N(2)-formyl-N(1)-(5-phospho-D-ribosyl)glycinamide from N(1)-(5-phospho-D-ribosyl)glycinamide (formate route): step 1/1. Functionally, involved in the de novo purine biosynthesis. Catalyzes the transfer of formate to 5-phospho-ribosyl-glycinamide (GAR), producing 5-phospho-ribosyl-N-formylglycinamide (FGAR). Formate is provided by PurU via hydrolysis of 10-formyl-tetrahydrofolate. The protein is Formate-dependent phosphoribosylglycinamide formyltransferase of Haloquadratum walsbyi (strain DSM 16790 / HBSQ001).